Reading from the N-terminus, the 415-residue chain is Nacrein-like protein C2 (415 aa).

The N-linked (GlcNAc...) asparagine glycan is linked to Asn-27. Residues 33–414 (AGFSYDRSIC…KNKVTVYKSF (382 aa)) form the Alpha-carbonic anhydrase domain. Residues His-132, His-134, and His-157 each contribute to the Zn(2+) site. The disordered stretch occupies residues 201 to 297 (DEPDDEECKH…GENGHKHGCR (97 aa)). Over residues 207–219 (ECKHILKGHHPDN) the composition is skewed to basic and acidic residues. Residues 220–289 (NENGNGDNGN…NNGENGNNGE (70 aa)) show a composition bias toward low complexity. A run of 22 repeats spans residues 225 to 227 (GDN), 228 to 230 (GNN), 231 to 233 (GYN), 234 to 236 (GDN), 237 to 239 (GNN), 240 to 242 (GDN), 243 to 245 (GNN), 246 to 248 (GYN), 249 to 251 (GDN), 252 to 254 (GNN), 255 to 257 (GVN), 258 to 260 (GNN), 261 to 263 (GYN), 264 to 266 (GDN), 267 to 269 (GNN), 270 to 272 (GDN), 273 to 275 (GNN), 276 to 278 (GEN), 279 to 281 (GNN), 282 to 284 (GEN), 285 to 286 (GN), and 288 to 290 (GEN). The segment at 225-290 (GDNGNNGYNG…NGENGNNGEN (66 aa)) is 27 X 3 AA approximate tandem repeats of G-X-N. 355 to 356 (TT) is a binding site for substrate.

Belongs to the alpha-carbonic anhydrase family. As to quaternary structure, homooligomer; disulfide-linked. May also be disulfide-linked to insoluble organic matrix. It depends on Zn(2+) as a cofactor. As to expression, expressed in the mantle.

It is found in the secreted. The protein localises to the extracellular space. The protein resides in the extracellular matrix. It catalyses the reaction hydrogencarbonate + H(+) = CO2 + H2O. In terms of biological role, acts as a negative regulator for calcification in the shells of mollusks. May function both as a calcium concentrator and as a carbonic anhydrase required for production of carbonate ions, which are assembled to CaCO(3) at mineralization sites. Is important for shell formation in both the calcitic prismatic layer and the aragonitic nacreous layer. Shows inhibitory activity of crystal formation when present in free state but, when attached to the insoluble matrix, may regulate the form and size of aragonite crystal. The chain is Nacrein-like protein C2 from Crassostrea nippona (Iwagaki oyster).